Consider the following 291-residue polypeptide: 4-diphosphocytidyl-2-C-methyl-D-erythritol kinase (291 aa).

Residue K10 is part of the active site. ATP is bound at residue 99–109 (PMGGGLGGGSS). D141 is a catalytic residue.

It belongs to the GHMP kinase family. IspE subfamily. In terms of assembly, homodimer.

It catalyses the reaction 4-CDP-2-C-methyl-D-erythritol + ATP = 4-CDP-2-C-methyl-D-erythritol 2-phosphate + ADP + H(+). The protein operates within isoprenoid biosynthesis; isopentenyl diphosphate biosynthesis via DXP pathway; isopentenyl diphosphate from 1-deoxy-D-xylulose 5-phosphate: step 3/6. In terms of biological role, catalyzes the phosphorylation of the position 2 hydroxy group of 4-diphosphocytidyl-2C-methyl-D-erythritol. This is 4-diphosphocytidyl-2-C-methyl-D-erythritol kinase from Photorhabdus laumondii subsp. laumondii (strain DSM 15139 / CIP 105565 / TT01) (Photorhabdus luminescens subsp. laumondii).